Reading from the N-terminus, the 146-residue chain is uncharacterized protein (146 aa).

Residues 87 to 121 (SRSHHSTAKSAKSALSSDSGDGSDPDPEPETFPSA) are disordered. The span at 94-106 (AKSAKSALSSDSG) shows a compositional bias: low complexity.

This is an uncharacterized protein from Escherichia coli (strain K12).